The chain runs to 182 residues: Large ribosomal subunit protein uL5 (182 aa).

The protein belongs to the universal ribosomal protein uL5 family. As to quaternary structure, part of the 50S ribosomal subunit; part of the 5S rRNA/L5/L18/L25 subcomplex. Contacts the 5S rRNA and the P site tRNA. Forms a bridge to the 30S subunit in the 70S ribosome.

This is one of the proteins that bind and probably mediate the attachment of the 5S RNA into the large ribosomal subunit, where it forms part of the central protuberance. In the 70S ribosome it contacts protein S13 of the 30S subunit (bridge B1b), connecting the 2 subunits; this bridge is implicated in subunit movement. Contacts the P site tRNA; the 5S rRNA and some of its associated proteins might help stabilize positioning of ribosome-bound tRNAs. This chain is Large ribosomal subunit protein uL5, found in Leptospira interrogans serogroup Icterohaemorrhagiae serovar copenhageni (strain Fiocruz L1-130).